A 266-amino-acid chain; its full sequence is PTS system mannose-specific EIIC component (266 aa).

Residue Met1 is modified to N-formylmethionine. Residues 1–4 (MEIT) lie on the Periplasmic side of the membrane. A PTS EIIC type-4 domain is found at 1–237 (MEITTLQIVL…GVIGTVMAVL (237 aa)). Residues 5–43 (TLQIVLVFIVACIAGMGSILDEFQFHRPLIACTLVGIVL) lie within the membrane without spanning it. Residues 44–46 (GDM) lie on the Periplasmic side of the membrane. The stretch at 47-86 (KTGIIIGGTLEMIALGWMNIGAAVAPDAALASIISTILVI) is an intramembrane region. Residues 87 to 90 (AGHQ) are Periplasmic-facing. Residues 91-124 (SIGAGIALAIPLAAAGQVLTIIVRTITVAFQHAA) are membrane-embedded. Residues 125-132 (DKAADNGN) lie on the Cytoplasmic side of the membrane. The segment at 133-160 (LTAISWIHVSSLFLQAMRVAIPAVIVAL) is a transmembrane helix. Residues 161-176 (SVGTSEVQNMLNAIPE) are Periplasmic-facing. The chain crosses the lipid bilayer at residues 177–200 (VVTNGLNIAGGMIVVVGYAMVINM). The Cytoplasmic portion of the chain corresponds to 201 to 207 (MRAGYLM). The hydrophobic stretch at 208–218 (PFFYLGFVTAA) threads the membrane. The Periplasmic segment spans residues 219–224 (FTNFNL). At 225 to 242 (VALGVIGTVMAVLYIQLS) the chain is embedded in the membrane. Residues 243 to 266 (PKYNRVAGAPAQAAGNNDLDNELD) lie on the Cytoplasmic side of the membrane.

As to quaternary structure, homotrimer of protomers that are composed of two subunits, IIC and IID.

It is found in the cell inner membrane. The phosphoenolpyruvate-dependent sugar phosphotransferase system (sugar PTS), a major carbohydrate active transport system, catalyzes the phosphorylation of incoming sugar substrates concomitantly with their translocation across the cell membrane. The enzyme II ManXYZ PTS system is involved in mannose transport. The protein is PTS system mannose-specific EIIC component (manY) of Escherichia coli O157:H7.